The following is a 98-amino-acid chain: Large ribosomal subunit protein uL23 (98 aa).

This sequence belongs to the universal ribosomal protein uL23 family. As to quaternary structure, part of the 50S ribosomal subunit. Contacts protein L29, and trigger factor when it is bound to the ribosome.

Its function is as follows. One of the early assembly proteins it binds 23S rRNA. One of the proteins that surrounds the polypeptide exit tunnel on the outside of the ribosome. Forms the main docking site for trigger factor binding to the ribosome. This chain is Large ribosomal subunit protein uL23, found in Dinoroseobacter shibae (strain DSM 16493 / NCIMB 14021 / DFL 12).